The following is an 884-amino-acid chain: Coatomer subunit gamma-1 (884 aa).

HEAT repeat units lie at residues 65-100 (VEAT…SPSS), 101-138 (DEVI…GTLL), 286-323 (RELA…TRPL), 325-357 (VTNC…TGNE), and 358-395 (SSVD…KFPL). The interval 592–612 (QPLQEKKAPGKKPPAGAPAPA) is disordered. Positions 602 to 612 (KKPPAGAPAPA) are enriched in pro residues.

The protein belongs to the COPG family. As to quaternary structure, oligomeric complex that consists of at least the alpha, beta, beta', gamma, delta, epsilon and zeta subunits.

It is found in the cytoplasm. Its subcellular location is the golgi apparatus membrane. The protein localises to the cytoplasmic vesicle. The protein resides in the COPI-coated vesicle membrane. The coatomer is a cytosolic protein complex that binds to dilysine motifs and reversibly associates with Golgi non-clathrin-coated vesicles, which further mediate biosynthetic protein transport from the ER, via the Golgi up to the trans Golgi network. Coatomer complex is required for budding from Golgi membranes, and is essential for the retrograde Golgi-to-ER transport of dilysine-tagged proteins. The chain is Coatomer subunit gamma-1 from Oryza sativa subsp. japonica (Rice).